The chain runs to 189 residues: MRNENGYNPKLISTRELFKSDLDKGKARLQVPFNQVKTPDFLTEDETRIIHENAMKIRDDGVPVNLVDPRMNKHALELRKWKMKGNWNYVFVKGWNDVLDANKSNSFKEKDVFPLWSFRSGTGKLCFALTPKIPATALLQENLAVAAMVLLLEVNLVRTKERELVFLYYHKKIHQATTTHNKCKVSWLY.

The TF-B3 DNA-binding region spans 33-133 (FNQVKTPDFL…KLCFALTPKI (101 aa)).

The protein resides in the nucleus. This is B3 domain-containing protein At2g32645 from Arabidopsis thaliana (Mouse-ear cress).